Consider the following 632-residue polypeptide: Pheromone-processing carboxypeptidase kex1 (632 aa).

An N-terminal signal peptide occupies residues 1–38 (MLLTTPSSRGSRAQSGIANVSWLALSLLLLFSPTLGSA). At 39 to 523 (KSAADYYVRS…KETEWKAYAK (485 aa)) the chain is on the lumenal side. N-linked (GlcNAc...) asparagine glycosylation is found at N119 and N126. Catalysis depends on residues S190 and D390. N441 and N449 each carry an N-linked (GlcNAc...) asparagine glycan. H452 is an active-site residue. The interval 480-509 (KPADSRIDGEKLPQTSVGGHPNSTAAEQQA) is disordered. The segment covering 492–506 (PQTSVGGHPNSTAAE) has biased composition (polar residues). N501 carries an N-linked (GlcNAc...) asparagine glycan. Residues 524 to 544 (SGEAALIVVIIGVTVWGFFIW) traverse the membrane as a helical segment. The Cytoplasmic segment spans residues 545–632 (RSRRRNRGYQ…SSTKPGGAQP (88 aa)). Residues 574-632 (RSGPADVEAGDFDESELDNLHSPGLEQEHYAVGDDSDEESPNHQPAAPPSSTKPGGAQP) form a disordered region. Acidic residues predominate over residues 581 to 590 (EAGDFDESEL).

The protein belongs to the peptidase S10 family.

It is found in the golgi apparatus. It localises to the trans-Golgi network membrane. The enzyme catalyses Preferential release of a C-terminal arginine or lysine residue.. Protease with a carboxypeptidase B-like function involved in the C-terminal processing of the lysine and arginine residues from protein precursors. Promotes cell fusion and is involved in the programmed cell death. The chain is Pheromone-processing carboxypeptidase kex1 (kex1) from Aspergillus fumigatus (strain CBS 144.89 / FGSC A1163 / CEA10) (Neosartorya fumigata).